A 114-amino-acid polypeptide reads, in one-letter code: Transcription initiation factor IIA subunit 2 (114 aa).

The protein belongs to the TFIIA subunit 2 family. TFIIA is a heterodimer composed of the large toa1 and the small toa2 subunits.

Its subcellular location is the nucleus. TFIIA is a component of the transcription machinery of RNA polymerase II and plays an important role in transcriptional activation. TFIIA in a complex with tbp mediates transcriptional activity. This Fusarium vanettenii (strain ATCC MYA-4622 / CBS 123669 / FGSC 9596 / NRRL 45880 / 77-13-4) (Fusarium solani subsp. pisi) protein is Transcription initiation factor IIA subunit 2 (toa2).